A 440-amino-acid polypeptide reads, in one-letter code: Nuclear fusion protein BIK1 (440 aa).

Residues 26-69 (GPVDTKAGMFAGVDLLANIGKNDGSFMGKKYFQTEYPQSGLFIQ) enclose the CAP-Gly domain. A phosphoserine mark is found at Ser95 and Ser110. A disordered region spans residues 108 to 157 (QFSPMDDPKSPTPMRSFRITSRHSGNQQSMDQEASDHHQQQEFGYDNRED). Residues 125 to 139 (RITSRHSGNQQSMDQ) show a composition bias toward polar residues. The span at 141–157 (ASDHHQQQEFGYDNRED) shows a compositional bias: basic and acidic residues. Residues 190–397 (NSSEVTIELR…AQAQTAVESL (208 aa)) are a coiled coil. The short motif at 416–429 (CEHCDTMGHNTAEC) is the CCHC-box element.

Its subcellular location is the cytoplasm. It localises to the cytoskeleton. The protein resides in the microtubule organizing center. It is found in the spindle pole body. The protein localises to the spindle. Required for nuclear fusion, chromosome disjunction, and nuclear segregation during mitosis. Probably required for the formation or stabilization of microtubules during mitosis and for spindle pole body fusion during conjugation. In Saccharomyces cerevisiae (strain ATCC 204508 / S288c) (Baker's yeast), this protein is Nuclear fusion protein BIK1 (BIK1).